We begin with the raw amino-acid sequence, 137 residues long: Ribosome-binding factor A (137 aa).

A disordered region spans residues 112–137 (KKDEVKEDESHEDESTDHTEETNEEP). Residues 127–137 (TDHTEETNEEP) show a composition bias toward basic and acidic residues.

The protein belongs to the RbfA family. In terms of assembly, monomer. Binds 30S ribosomal subunits, but not 50S ribosomal subunits or 70S ribosomes.

Its subcellular location is the cytoplasm. Its function is as follows. One of several proteins that assist in the late maturation steps of the functional core of the 30S ribosomal subunit. Associates with free 30S ribosomal subunits (but not with 30S subunits that are part of 70S ribosomes or polysomes). Required for efficient processing of 16S rRNA. May interact with the 5'-terminal helix region of 16S rRNA. This chain is Ribosome-binding factor A, found in Coprothermobacter proteolyticus (strain ATCC 35245 / DSM 5265 / OCM 4 / BT).